A 278-amino-acid polypeptide reads, in one-letter code: Large ribosomal subunit protein uL2 (278 aa).

Residues 222–278 (GVVMNPVDHPHGGGEGRTSGGRHPVTPWGKPTKGAKTRKNKSTDKFIIRSRHERKKR) form a disordered region. Over residues 269–278 (IRSRHERKKR) the composition is skewed to basic residues.

Belongs to the universal ribosomal protein uL2 family. Part of the 50S ribosomal subunit. Forms a bridge to the 30S subunit in the 70S ribosome.

In terms of biological role, one of the primary rRNA binding proteins. Required for association of the 30S and 50S subunits to form the 70S ribosome, for tRNA binding and peptide bond formation. It has been suggested to have peptidyltransferase activity; this is somewhat controversial. Makes several contacts with the 16S rRNA in the 70S ribosome. The protein is Large ribosomal subunit protein uL2 of Maricaulis maris (strain MCS10) (Caulobacter maris).